The sequence spans 320 residues: RNA-binding protein Musashi homolog 1 (320 aa).

Low complexity predominate over residues 1–14 (MTTTVSTGATAVAT). Residues 1-48 (MTTTVSTGATAVATLRETSPPVDGHEEARLNADSDDGSHGSQDPGKMF) are disordered. At Thr-18 the chain carries Phosphothreonine. 2 positions are modified to phosphoserine: Ser-19 and Ser-34. Basic and acidic residues predominate over residues 23 to 38 (DGHEEARLNADSDDGS). 2 consecutive RRM domains span residues 45–124 (GKMF…FPKR) and 134–211 (KKVF…KAQP). Required for binding to target mRNAs stretches follow at residues 88-93 (FGFITF) and 177-182 (FGFVTF).

The protein belongs to the Musashi family. Expressed in the gut and in AVA, AFD, RMD, RMED, RMEV, RMER and RMEL neurons (at protein level). In the tail expressed in neurons and all the ray sensilla. Expressed in male specific C1-C4 neurons.

Its subcellular location is the cytoplasm. It localises to the perikaryon. Its function is as follows. RNA binding protein that regulates the expression of target mRNAs at the translation level. Binds RNA containing the 5'-[GA]U(1-3)AGU-3' motif located in the 3' UTR of the target mRNA. Binds to the mRNA of three Arp2/3 complex components arx-1, arx-2 and arx-3 and negatively regulates their translation during association learning. Plays a role in time-dependent memory loss and the retention of conditioned behavior over time, probably through negative regulation of the Arp2/3 actin cytoskeleton branching complex and regulation of synapse size. Required for two aspects of male mating behavior: turning around the hermaphrodite head or tail and vulva location. The polypeptide is RNA-binding protein Musashi homolog 1 (Caenorhabditis elegans).